We begin with the raw amino-acid sequence, 128 residues long: Transcription antitermination protein NusB (128 aa).

This sequence belongs to the NusB family.

Functionally, involved in transcription antitermination. Required for transcription of ribosomal RNA (rRNA) genes. Binds specifically to the boxA antiterminator sequence of the ribosomal RNA (rrn) operons. This Listeria welshimeri serovar 6b (strain ATCC 35897 / DSM 20650 / CCUG 15529 / CIP 8149 / NCTC 11857 / SLCC 5334 / V8) protein is Transcription antitermination protein NusB.